We begin with the raw amino-acid sequence, 105 residues long: Putative membrane protein insertion efficiency factor (105 aa).

Belongs to the UPF0161 family.

Its subcellular location is the cell inner membrane. Its function is as follows. Could be involved in insertion of integral membrane proteins into the membrane. The chain is Putative membrane protein insertion efficiency factor from Nitratidesulfovibrio vulgaris (strain DSM 19637 / Miyazaki F) (Desulfovibrio vulgaris).